The chain runs to 62 residues: MARYRRHSRSRSRSRYRRRRRRRSRGRRRRTYRRSRRHSRRRRGRRRGYSRRRYSRRGRRRY.

The disordered stretch occupies residues M1–Y62.

The protein belongs to the protamine P1 family. Testis.

Its subcellular location is the nucleus. The protein resides in the chromosome. Its function is as follows. Protamines substitute for histones in the chromatin of sperm during the haploid phase of spermatogenesis. They compact sperm DNA into a highly condensed, stable and inactive complex. The chain is Sperm protamine P1 (PRM1) from Neophascogale lorentzii (Long-clawed marsupial mouse).